The primary structure comprises 243 residues: Ubiquinone/menaquinone biosynthesis C-methyltransferase UbiE (243 aa).

Residues T69, D90, and 116 to 117 (DA) each bind S-adenosyl-L-methionine.

This sequence belongs to the class I-like SAM-binding methyltransferase superfamily. MenG/UbiE family.

The catalysed reaction is a 2-demethylmenaquinol + S-adenosyl-L-methionine = a menaquinol + S-adenosyl-L-homocysteine + H(+). The enzyme catalyses a 2-methoxy-6-(all-trans-polyprenyl)benzene-1,4-diol + S-adenosyl-L-methionine = a 5-methoxy-2-methyl-3-(all-trans-polyprenyl)benzene-1,4-diol + S-adenosyl-L-homocysteine + H(+). It participates in quinol/quinone metabolism; menaquinone biosynthesis; menaquinol from 1,4-dihydroxy-2-naphthoate: step 2/2. The protein operates within cofactor biosynthesis; ubiquinone biosynthesis. Its function is as follows. Methyltransferase required for the conversion of demethylmenaquinol (DMKH2) to menaquinol (MKH2) and the conversion of 2-polyprenyl-6-methoxy-1,4-benzoquinol (DDMQH2) to 2-polyprenyl-3-methyl-6-methoxy-1,4-benzoquinol (DMQH2). In Cupriavidus taiwanensis (strain DSM 17343 / BCRC 17206 / CCUG 44338 / CIP 107171 / LMG 19424 / R1) (Ralstonia taiwanensis (strain LMG 19424)), this protein is Ubiquinone/menaquinone biosynthesis C-methyltransferase UbiE.